We begin with the raw amino-acid sequence, 20 residues long: SNTSHQDFHSFYGTNLMIGG.

This sequence belongs to the cytochrome c oxidase VIIb family. In terms of assembly, component of the cytochrome c oxidase (complex IV, CIV), a multisubunit enzyme composed of 14 subunits. The complex is composed of a catalytic core of 3 subunits MT-CO1, MT-CO2 and MT-CO3, encoded in the mitochondrial DNA, and 11 supernumerary subunits COX4I, COX5A, COX5B, COX6A, COX6B, COX6C, COX7A, COX7B, COX7C, COX8 and NDUFA4, which are encoded in the nuclear genome. The complex exists as a monomer or a dimer and forms supercomplexes (SCs) in the inner mitochondrial membrane with NADH-ubiquinone oxidoreductase (complex I, CI) and ubiquinol-cytochrome c oxidoreductase (cytochrome b-c1 complex, complex III, CIII), resulting in different assemblies (supercomplex SCI(1)III(2)IV(1) and megacomplex MCI(2)III(2)IV(2)).

It is found in the mitochondrion inner membrane. The enzyme catalyses 4 Fe(II)-[cytochrome c] + O2 + 8 H(+)(in) = 4 Fe(III)-[cytochrome c] + 2 H2O + 4 H(+)(out). It functions in the pathway energy metabolism; oxidative phosphorylation. Its function is as follows. Component of the cytochrome c oxidase, the last enzyme in the mitochondrial electron transport chain which drives oxidative phosphorylation. The respiratory chain contains 3 multisubunit complexes succinate dehydrogenase (complex II, CII), ubiquinol-cytochrome c oxidoreductase (cytochrome b-c1 complex, complex III, CIII) and cytochrome c oxidase (complex IV, CIV), that cooperate to transfer electrons derived from NADH and succinate to molecular oxygen, creating an electrochemical gradient over the inner membrane that drives transmembrane transport and the ATP synthase. Cytochrome c oxidase is the component of the respiratory chain that catalyzes the reduction of oxygen to water. Electrons originating from reduced cytochrome c in the intermembrane space (IMS) are transferred via the dinuclear copper A center (CU(A)) of subunit 2 and heme A of subunit 1 to the active site in subunit 1, a binuclear center (BNC) formed by heme A3 and copper B (CU(B)). The BNC reduces molecular oxygen to 2 water molecules using 4 electrons from cytochrome c in the IMS and 4 protons from the mitochondrial matrix. This is Cytochrome c oxidase subunit 7B-liver, mitochondrial from Thunnus obesus (Bigeye tuna).